Consider the following 129-residue polypeptide: MEEFDVDLDFGGAGHTDDGDGLVAVIAQDADSRDVLMLAYATREAVARTATTGRAHYYSRSRDELWEKGATSGNTQSVDEIRVDCDGDALLYLVAQTGGACHTGHESCFHRTLDGDTVGDQVFDPDDAY.

Asp84 contributes to the Mg(2+) binding site. Position 85 (Cys85) interacts with Zn(2+). The Mg(2+) site is built by Asp86 and Asp88. Positions 101 and 108 each coordinate Zn(2+).

Belongs to the PRA-CH family. In terms of assembly, homodimer. Mg(2+) is required as a cofactor. Requires Zn(2+) as cofactor.

The protein localises to the cytoplasm. It catalyses the reaction 1-(5-phospho-beta-D-ribosyl)-5'-AMP + H2O = 1-(5-phospho-beta-D-ribosyl)-5-[(5-phospho-beta-D-ribosylamino)methylideneamino]imidazole-4-carboxamide. It participates in amino-acid biosynthesis; L-histidine biosynthesis; L-histidine from 5-phospho-alpha-D-ribose 1-diphosphate: step 3/9. Its function is as follows. Catalyzes the hydrolysis of the adenine ring of phosphoribosyl-AMP. The protein is Phosphoribosyl-AMP cyclohydrolase of Halobacterium salinarum (strain ATCC 700922 / JCM 11081 / NRC-1) (Halobacterium halobium).